We begin with the raw amino-acid sequence, 349 residues long: Cyclic amide hydrolase (349 aa).

Positions methionine 1–serine 90 are RU A. A substrate-binding site is contributed by arginine 38. The interval glycine 99–proline 231 is RU B. The active site involves lysine 149. Substrate is bound by residues arginine 176, serine 214–alanine 215, lysine 311, and serine 330–glycine 331. Serine 214 functions as the Nucleophile in the catalytic mechanism. Residues tyrosine 237–arginine 349 form an RU C region.

The protein belongs to the cyclic amide hydrolase (CyAH) family. As to quaternary structure, homotetramer.

Functionally, cyclic amide hydrolase of unknown substrate specificity. Catalyzes the hydrolytic ring-opening of a cyclic amide. Does not act on cyanuric acid nor barbituric acid. This is Cyclic amide hydrolase from Rhodococcus sp.